A 59-amino-acid polypeptide reads, in one-letter code: Dybowskin-1CDYa (59 aa).

The N-terminal stretch at 1–22 is a signal peptide; that stretch reads MFTLKKSLLLLFFLGTINFSLC. Positions 23–44 are excised as a propeptide; it reads EEERNAEEERRDYPEERDVEVE.

Belongs to the frog skin active peptide (FSAP) family. Brevinin subfamily. In terms of tissue distribution, expressed by the skin glands.

The protein resides in the secreted. Its function is as follows. Antimicrobial peptide. Has activity against the Gram-positive bacterium S.aureus (MIC=6 uM) and the Gram-negative bacterium E.coli (MIC=3 uM). Lacks hemolytic activity against human erythrocytes. The chain is Dybowskin-1CDYa from Rana dybowskii (Dybovsky's frog).